The chain runs to 701 residues: Cytosolic endo-beta-N-acetylglucosaminidase 2 (701 aa).

This sequence belongs to the glycosyl hydrolase 85 family.

Its subcellular location is the cytoplasm. The protein localises to the cytosol. The enzyme catalyses an N(4)-(oligosaccharide-(1-&gt;3)-[oligosaccharide-(1-&gt;6)]-beta-D-Man-(1-&gt;4)-beta-D-GlcNAc-(1-&gt;4)-alpha-D-GlcNAc)-L-asparaginyl-[protein] + H2O = an oligosaccharide-(1-&gt;3)-[oligosaccharide-(1-&gt;6)]-beta-D-Man-(1-&gt;4)-D-GlcNAc + N(4)-(N-acetyl-beta-D-glucosaminyl)-L-asparaginyl-[protein]. Functionally, endoglycosidase that releases N-glycans from glycoproteins by cleaving the beta-1,4-glycosidic bond in the N,N'-diacetylchitobiose core. Involved in the production of high-mannose type N-glycans during plant development and fruit maturation. This Arabidopsis thaliana (Mouse-ear cress) protein is Cytosolic endo-beta-N-acetylglucosaminidase 2.